The following is a 211-amino-acid chain: Large ribosomal subunit protein bL25 (211 aa).

Positions 175–211 (VSEPVEQDLGEESETEEEGAEGEKPAESTGEEPGDDE) are disordered. Over residues 179 to 194 (VEQDLGEESETEEEGA) the composition is skewed to acidic residues.

This sequence belongs to the bacterial ribosomal protein bL25 family. CTC subfamily. In terms of assembly, part of the 50S ribosomal subunit; part of the 5S rRNA/L5/L18/L25 subcomplex. Contacts the 5S rRNA. Binds to the 5S rRNA independently of L5 and L18.

In terms of biological role, this is one of the proteins that binds to the 5S RNA in the ribosome where it forms part of the central protuberance. The polypeptide is Large ribosomal subunit protein bL25 (Kocuria rhizophila (strain ATCC 9341 / DSM 348 / NBRC 103217 / DC2201)).